Consider the following 80-residue polypeptide: Conotoxin VnMSGL-0121 (80 aa).

Positions 1-20 (MSGLGIMVLTLLLLVSMATS) are cleaved as a signal peptide. The propeptide occupies 21-44 (HQDGGGKQATQRDAINVRRRRSIT). Intrachain disulfides connect cysteine 52-cysteine 65, cysteine 56-cysteine 74, and cysteine 64-cysteine 78. Phenylalanine 79 carries the post-translational modification Phenylalanine amide.

It belongs to the conotoxin O3 superfamily. Expressed by the venom duct.

The protein resides in the secreted. This is Conotoxin VnMSGL-0121 from Conus ventricosus (Mediterranean cone).